We begin with the raw amino-acid sequence, 311 residues long: MTRRDTPKFTAGQLNVYTRPGDVAAVTRALRATGRRIVLVPTMGALHEGHLTLIRAAKRVTGAVVVVSIFVNPLQFAANEDLGAYPRTLDADLDALRAEGVDIAFTPTADDMYPNGMRTTVHPGPLGAELEGALRPTHFAGVLTVVLKLFNTVRPDRAYFGEKDFQQLALIRQMVTDLDLEVEIQGVPIVREPDGLAMSSRNRYLDAVQREQAGALSAALLAGMYAAGEGTAAAVDAARAVLDEVPAIEVDYLEVRDAMLGPAPEVGMGRMLVAGRLGATRLLDNIAIDIGVPSGPGRQAEFDEHELPWRN.

43-50 is an ATP binding site; the sequence is MGALHEGH. The Proton donor role is filled by His50. Gln75 is a (R)-pantoate binding site. Gln75 is a beta-alanine binding site. 161 to 164 is an ATP binding site; it reads GEKD. Gln167 contributes to the (R)-pantoate binding site. ATP-binding positions include Val190 and 198 to 201; that span reads MSSR.

Belongs to the pantothenate synthetase family. As to quaternary structure, homodimer.

The protein localises to the cytoplasm. The catalysed reaction is (R)-pantoate + beta-alanine + ATP = (R)-pantothenate + AMP + diphosphate + H(+). The protein operates within cofactor biosynthesis; (R)-pantothenate biosynthesis; (R)-pantothenate from (R)-pantoate and beta-alanine: step 1/1. Functionally, catalyzes the condensation of pantoate with beta-alanine in an ATP-dependent reaction via a pantoyl-adenylate intermediate. This chain is Pantothenate synthetase, found in Mycolicibacterium vanbaalenii (strain DSM 7251 / JCM 13017 / BCRC 16820 / KCTC 9966 / NRRL B-24157 / PYR-1) (Mycobacterium vanbaalenii).